Consider the following 193-residue polypeptide: Large ribosomal subunit protein uL11 (193 aa).

It belongs to the universal ribosomal protein uL11 family. Part of the ribosomal stalk of the 50S ribosomal subunit. Interacts with L10 and the large rRNA to form the base of the stalk. L10 forms an elongated spine to which L12 dimers bind in a sequential fashion forming a multimeric L10(L12)X complex. In terms of processing, one or more lysine residues are methylated.

Forms part of the ribosomal stalk which helps the ribosome interact with GTP-bound translation factors. In Mycoplasmopsis synoviae (strain 53) (Mycoplasma synoviae), this protein is Large ribosomal subunit protein uL11.